The primary structure comprises 279 residues: Pantothenate synthetase (279 aa).

26–33 is a binding site for ATP; it reads MGNLHEGH. His33 acts as the Proton donor in catalysis. A (R)-pantoate-binding site is contributed by Gln57. Gln57 contributes to the beta-alanine binding site. ATP is bound at residue 144 to 147; sequence GKKD. Gln150 serves as a coordination point for (R)-pantoate. Residues Val173 and 181–184 each bind ATP; that span reads LSSR.

It belongs to the pantothenate synthetase family. In terms of assembly, homodimer.

The protein resides in the cytoplasm. It carries out the reaction (R)-pantoate + beta-alanine + ATP = (R)-pantothenate + AMP + diphosphate + H(+). The protein operates within cofactor biosynthesis; (R)-pantothenate biosynthesis; (R)-pantothenate from (R)-pantoate and beta-alanine: step 1/1. Functionally, catalyzes the condensation of pantoate with beta-alanine in an ATP-dependent reaction via a pantoyl-adenylate intermediate. This Burkholderia vietnamiensis (strain G4 / LMG 22486) (Burkholderia cepacia (strain R1808)) protein is Pantothenate synthetase.